The chain runs to 470 residues: Crh-like protein UTR2 (470 aa).

Residues 1 to 23 (MRFSTLHFAFLATLSSIFTVVAA) form the signal peptide. Cys58 and Cys69 are disulfide-bonded. Residues Asn65, Asn100, and Asn125 are each glycosylated (N-linked (GlcNAc...) asparagine). The 188-residue stretch at 95–282 (SDYLGNSTEA…WAGGLINWDS (188 aa)) folds into the GH16 domain. The active-site Nucleophile is the Glu168. Catalysis depends on Glu172, which acts as the Proton donor. Glu172 is a binding site for chitin. 6 N-linked (GlcNAc...) asparagine glycosylation sites follow: Asn177, Asn194, Asn198, Asn202, Asn235, and Asn239. Residues Trp259 and Thr270 each contribute to the chitin site. N-linked (GlcNAc...) asparagine glycosylation is found at Asn314 and Asn327. Positions 347–446 (SDDATGFDPQ…SSGSSSQGVA (100 aa)) are disordered. 2 stretches are compositionally biased toward low complexity: residues 370–384 (TTIT…ITSV) and 392–408 (TANV…QATA). Polar residues predominate over residues 409 to 418 (KSSTGTNTYD). Residues 433-446 (TDSGSSGSSSQGVA) show a composition bias toward low complexity. The GPI-anchor amidated serine moiety is linked to residue Ser440. The propeptide at 441 to 470 (SSQGVANSLNESVISGIFASICLGILSFFM) is removed in mature form. An N-linked (GlcNAc...) asparagine glycan is attached at Asn450.

Belongs to the glycosyl hydrolase 16 family. CRH1 subfamily. The GPI-anchor is attached to the protein in the endoplasmic reticulum and serves to target the protein to the cell surface. There, the glucosamine-inositol phospholipid moiety is cleaved off and the GPI-modified mannoprotein is covalently attached via its lipidless GPI glycan remnant to the 1,6-beta-glucan of the outer cell wall layer.

The protein resides in the secreted. It localises to the cell wall. The protein localises to the membrane. It carries out the reaction Random endo-hydrolysis of N-acetyl-beta-D-glucosaminide (1-&gt;4)-beta-linkages in chitin and chitodextrins.. Its function is as follows. Dual chitinase/transglycosylase that plays a role in cell wall architecture. Chitinase and transglycosylase activities are coupled. Required for the polysaccharide cross-linking at the septa and the cell wall. More specifically, transfers chitin to 1,6-beta-glucan in the cell wall. Plays an important role in fungal pathogenesis via its functions in cell wall assembly and regeneration, filamentation, and adherence to host cells. Acts as a cell surface antigen in acute candidemia patients. The sequence is that of Crh-like protein UTR2 from Candida albicans (strain SC5314 / ATCC MYA-2876) (Yeast).